The primary structure comprises 314 residues: 4-hydroxy-3-methylbut-2-enyl diphosphate reductase (314 aa).

Cys12 is a binding site for [4Fe-4S] cluster. Residues His41 and His74 each contribute to the (2E)-4-hydroxy-3-methylbut-2-enyl diphosphate site. Dimethylallyl diphosphate-binding residues include His41 and His74. His41 and His74 together coordinate isopentenyl diphosphate. Cys96 contacts [4Fe-4S] cluster. His124 is a (2E)-4-hydroxy-3-methylbut-2-enyl diphosphate binding site. A dimethylallyl diphosphate-binding site is contributed by His124. Residue His124 coordinates isopentenyl diphosphate. Catalysis depends on Glu126, which acts as the Proton donor. Thr167 contributes to the (2E)-4-hydroxy-3-methylbut-2-enyl diphosphate binding site. A [4Fe-4S] cluster-binding site is contributed by Cys197. Ser225, Ser226, Asn227, and Ser269 together coordinate (2E)-4-hydroxy-3-methylbut-2-enyl diphosphate. The dimethylallyl diphosphate site is built by Ser225, Ser226, Asn227, and Ser269. 4 residues coordinate isopentenyl diphosphate: Ser225, Ser226, Asn227, and Ser269.

Belongs to the IspH family. [4Fe-4S] cluster is required as a cofactor.

It carries out the reaction isopentenyl diphosphate + 2 oxidized [2Fe-2S]-[ferredoxin] + H2O = (2E)-4-hydroxy-3-methylbut-2-enyl diphosphate + 2 reduced [2Fe-2S]-[ferredoxin] + 2 H(+). The catalysed reaction is dimethylallyl diphosphate + 2 oxidized [2Fe-2S]-[ferredoxin] + H2O = (2E)-4-hydroxy-3-methylbut-2-enyl diphosphate + 2 reduced [2Fe-2S]-[ferredoxin] + 2 H(+). Its pathway is isoprenoid biosynthesis; dimethylallyl diphosphate biosynthesis; dimethylallyl diphosphate from (2E)-4-hydroxy-3-methylbutenyl diphosphate: step 1/1. It participates in isoprenoid biosynthesis; isopentenyl diphosphate biosynthesis via DXP pathway; isopentenyl diphosphate from 1-deoxy-D-xylulose 5-phosphate: step 6/6. Catalyzes the conversion of 1-hydroxy-2-methyl-2-(E)-butenyl 4-diphosphate (HMBPP) into a mixture of isopentenyl diphosphate (IPP) and dimethylallyl diphosphate (DMAPP). Acts in the terminal step of the DOXP/MEP pathway for isoprenoid precursor biosynthesis. This is 4-hydroxy-3-methylbut-2-enyl diphosphate reductase from Aliivibrio fischeri (strain MJ11) (Vibrio fischeri).